The sequence spans 905 residues: Probable aromatic-L-amino-acid decarboxylase (905 aa).

The tract at residues 250–296 is disordered; sequence YLNPIIKTPPHNERVPKMKTNISKTRKKKGKVSDASKDSRPSETKKE. The segment covering 280 to 296 has biased composition (basic and acidic residues); sequence KVSDASKDSRPSETKKE. Pyridoxal 5'-phosphate contacts are provided by Thr492 and Ser591. An N6-(pyridoxal phosphate)lysine modification is found at Lys648. Positions 861–905 are disordered; it reads HTAEYADPPGKSNKSPQVAAKGELPSAAPPSSRTPNSDISEKSDR. The segment covering 889-898 has biased composition (polar residues); sequence PPSSRTPNSD.

This sequence belongs to the group II decarboxylase family. Homodimer. Requires pyridoxal 5'-phosphate as cofactor.

It carries out the reaction L-dopa + H(+) = dopamine + CO2. It catalyses the reaction 5-hydroxy-L-tryptophan + H(+) = serotonin + CO2. Its pathway is catecholamine biosynthesis; dopamine biosynthesis; dopamine from L-tyrosine: step 2/2. Its function is as follows. Catalyzes the decarboxylation of L-3,4-dihydroxyphenylalanine (DOPA) to dopamine, L-5-hydroxytryptophan to serotonin and L-tryptophan to tryptamine. The chain is Probable aromatic-L-amino-acid decarboxylase (hdl-1) from Caenorhabditis elegans.